The chain runs to 117 residues: Glycoprotein hormones alpha chain (117 aa).

An N-terminal signal peptide occupies residues M1 to S23. 5 disulfide bridges follow: C34–C57, C37–C86, C54–C107, C58–C109, and C85–C112. Residues N78 and N103 are each glycosylated (N-linked (GlcNAc...) asparagine).

The protein belongs to the glycoprotein hormones subunit alpha family. Heterodimer. Glycoprotein hormones are heterodimers composed of a common alpha chain described here and a unique beta chain which confers their biological specificity to the different hormones.

It is found in the secreted. Shared alpha chain of heterodimeric glycoprotein hormones. These hormones bind specific receptors on target cells that in turn activate downstream signaling pathways. Involved in gametogenesis and steroidogenesis. The sequence is that of Glycoprotein hormones alpha chain (cga) from Acanthopagrus latus (Yellowfin seabream).